The sequence spans 476 residues: Glycogen synthase (476 aa).

Residue K15 participates in ADP-alpha-D-glucose binding.

The protein belongs to the glycosyltransferase 1 family. Bacterial/plant glycogen synthase subfamily.

The catalysed reaction is [(1-&gt;4)-alpha-D-glucosyl](n) + ADP-alpha-D-glucose = [(1-&gt;4)-alpha-D-glucosyl](n+1) + ADP + H(+). It functions in the pathway glycan biosynthesis; glycogen biosynthesis. Its function is as follows. Synthesizes alpha-1,4-glucan chains using ADP-glucose. The polypeptide is Glycogen synthase (Yersinia enterocolitica serotype O:8 / biotype 1B (strain NCTC 13174 / 8081)).